Consider the following 326-residue polypeptide: Zona pellucida-binding protein 2 (326 aa).

Residues 1-20 (MLAWALLSAVLWSLAGVGSA) form the signal peptide. Asn86, Asn220, and Asn256 each carry an N-linked (GlcNAc...) asparagine glycan.

The protein belongs to the zona pellucida-binding protein Sp38 family. N-glycosylated.

It is found in the secreted. It localises to the cytoplasmic vesicle. Its subcellular location is the secretory vesicle. The protein localises to the acrosome. In terms of biological role, is implicated in sperm-oocyte interaction during fertilization. This is Zona pellucida-binding protein 2 (Zpbp2) from Rattus norvegicus (Rat).